We begin with the raw amino-acid sequence, 481 residues long: Extracellular exo-alpha-(1-&gt;5)-L-arabinofuranosidase (481 aa).

The N-terminal stretch at Met-1–Ala-27 is a signal peptide. The tract at residues Phe-37–Pro-336 is catalytic. Catalysis depends on Asp-47, which acts as the Proton acceptor. Residue Asn-186 coordinates substrate. The active-site Proton donor is Glu-223. Residues His-287, Arg-321, His-363–Phe-366, Asp-379, His-457–Asn-460, and Asp-475 contribute to the substrate site. The segment at Val-349–Tyr-479 is ABD.

Belongs to the glycosyl hydrolase 43 family.

Its subcellular location is the secreted. The enzyme catalyses Hydrolysis of terminal non-reducing alpha-L-arabinofuranoside residues in alpha-L-arabinosides.. It functions in the pathway glycan metabolism; L-arabinan degradation. Involved in the degradation of arabinan and is a key enzyme in the complete degradation of the plant cell wall. Catalyzes only the cleavage of terminal alpha-(1-&gt;5) arabinofuranosyl bonds of arabinan present in the arabinofuranosyl polysaccharides or oligosaccharides. It cannot act on other arabinose-containing polysaccharides and arabinoxylo-oligosaccharides. This chain is Extracellular exo-alpha-(1-&gt;5)-L-arabinofuranosidase, found in Streptomyces avermitilis (strain ATCC 31267 / DSM 46492 / JCM 5070 / NBRC 14893 / NCIMB 12804 / NRRL 8165 / MA-4680).